Here is a 324-residue protein sequence, read N- to C-terminus: NADH-quinone oxidoreductase subunit H (324 aa).

8 helical membrane-spanning segments follow: residues 11 to 31, 81 to 101, 114 to 134, 154 to 174, 186 to 206, 237 to 257, 265 to 285, and 304 to 324; these read ILITVGKAVVILLVVVTCGAF, VIFTLAPMIAFTSMLIAFAIV, IGILFFLMMAGLAVYAVLFAG, VSYEVFIGLSLMGVVAQAGSF, LWNVIPQFFGFITFAIAGVAV, FFVGEYIGIVTVSALMVTLFF, LPPFVWFALKTGFFMMMFILI, and VCLPITLLNLLATAAVILYNA.

The protein belongs to the complex I subunit 1 family. As to quaternary structure, NDH-1 is composed of 13 different subunits. Subunits NuoA, H, J, K, L, M, N constitute the membrane sector of the complex.

It is found in the cell inner membrane. The enzyme catalyses a quinone + NADH + 5 H(+)(in) = a quinol + NAD(+) + 4 H(+)(out). NDH-1 shuttles electrons from NADH, via FMN and iron-sulfur (Fe-S) centers, to quinones in the respiratory chain. The immediate electron acceptor for the enzyme in this species is believed to be ubiquinone. Couples the redox reaction to proton translocation (for every two electrons transferred, four hydrogen ions are translocated across the cytoplasmic membrane), and thus conserves the redox energy in a proton gradient. This subunit may bind ubiquinone. This chain is NADH-quinone oxidoreductase subunit H, found in Pectobacterium atrosepticum (strain SCRI 1043 / ATCC BAA-672) (Erwinia carotovora subsp. atroseptica).